The following is a 215-amino-acid chain: Histidine biosynthesis bifunctional protein HisIE (215 aa).

The interval 1–118 (MTKSISIEHL…YKNDVALLQI (118 aa)) is phosphoribosyl-AMP cyclohydrolase. Residues 119 to 215 (IPQVSAKIKE…HVEKEGQQRE (97 aa)) form a phosphoribosyl-ATP pyrophosphohydrolase region.

In the N-terminal section; belongs to the PRA-CH family. It in the C-terminal section; belongs to the PRA-PH family.

Its subcellular location is the cytoplasm. It carries out the reaction 1-(5-phospho-beta-D-ribosyl)-ATP + H2O = 1-(5-phospho-beta-D-ribosyl)-5'-AMP + diphosphate + H(+). The enzyme catalyses 1-(5-phospho-beta-D-ribosyl)-5'-AMP + H2O = 1-(5-phospho-beta-D-ribosyl)-5-[(5-phospho-beta-D-ribosylamino)methylideneamino]imidazole-4-carboxamide. The protein operates within amino-acid biosynthesis; L-histidine biosynthesis; L-histidine from 5-phospho-alpha-D-ribose 1-diphosphate: step 2/9. It participates in amino-acid biosynthesis; L-histidine biosynthesis; L-histidine from 5-phospho-alpha-D-ribose 1-diphosphate: step 3/9. The polypeptide is Histidine biosynthesis bifunctional protein HisIE (Oceanobacillus iheyensis (strain DSM 14371 / CIP 107618 / JCM 11309 / KCTC 3954 / HTE831)).